Reading from the N-terminus, the 191-residue chain is Chromobox protein homolog 5 (191 aa).

A phosphoserine mark is found at serine 11, serine 12, serine 13, and serine 14. Residues 20-78 (YVVEKVLDRRVVKGQVEYLLKWKGFSEEHNTWEPEKNLDCPELISEFMKKYKKMKEGEN) enclose the Chromo 1 domain. A Glycyl lysine isopeptide (Lys-Gly) (interchain with G-Cter in SUMO2) cross-link involves residue lysine 32. Lysine 40 bears the N6-acetyllysine mark. The interval 70–117 (YKKMKEGENNKPREKSESNKRKSNFSNSADDIKSKKKREQSNDIARGF) is disordered. Basic and acidic residues predominate over residues 73–89 (MKEGENNKPREKSESNK). Lysine 91 is covalently cross-linked (Glycyl lysine isopeptide (Lys-Gly) (interchain with G-Cter in SUMO2)). Phosphoserine occurs at positions 92, 95, and 97. Glycyl lysine isopeptide (Lys-Gly) (interchain with G-Cter in SUMO2) cross-links involve residues lysine 102, lysine 106, lysine 154, and lysine 184. Positions 121–179 (LEPEKIIGATDSCGDLMFLMKWKDTDEADLVLAKEANVKCPQIVIAFYEERLTWHAYPE) constitute a Chromo 2; shadow subtype domain.

In terms of assembly, homodimer. Interacts with histone H3 methylated at 'Lys-9'. Interacts (via Chromo 2; shadow subtype domain) with the MIS12 complex subunit NSL1; the interaction is direct, involves dimeric CBX5, and occurs during interphase. Interacts with POGZ; POGZ and PXVXL motif-containing proteins such as INCENP and TRIM28 compete for interaction with CBX5. Interacts with LRIF1 (via PxVxL motif). Interacts with INCENP. Interacts with TRIM24. Interacts (via the chromoshadow domain) with ATRX; the interaction is direct. Interacts (via the chromoshadow domain) with CHAF1A; the interaction is direct. Interacts (via the chromoshadow domain) with LBR; the interaction is direct. Interacts (via the chromoshadow domain) with NIPBL; the interaction is direct. Interacts (via the chromoshadow domain) with SP100; the interaction is direct. Interacts (via the chromoshadow domain) with STAM2; the interaction is direct. Interacts (via the chromoshadow domain) with TRIM28; the interaction is direct. Interacts (via the chromoshadow domain) with CBX3; the interaction is direct. Interacts with PRR14 (via N-terminus). Interacts with RRP1B. Interacts with HNRNPU (via C-terminus); this interaction is, at least in part, RNA-dependent. Interacts with ZNF263; recruited to the SIX3 promoter along with other proteins involved in chromatin modification and transcriptional corepression where it contributes to transcriptional repression. Interacts with AURKB during mitosis. Interacts with CHAMP1. Interacts with BAHD1. Interacts with HP1BP3. Interacts with CHD3. Interacts with CHD4. Interacts with SMYD5. Interacts with KMT5B. Interacts with KMT5C. (Microbial infection) Interacts with JC virus agnoprotein; this interaction induces the dissociation of CBX5 from LBR, resulting in destabilization of the nuclear envelope. Post-translationally, phosphorylation of HP1 and LBR may be responsible for some of the alterations in chromatin organization and nuclear structure which occur at various times during the cell cycle. Phosphorylated during interphase and possibly hyper-phosphorylated during mitosis. In terms of processing, ubiquitinated.

The protein localises to the nucleus. Its subcellular location is the chromosome. The protein resides in the centromere. In terms of biological role, component of heterochromatin that recognizes and binds histone H3 tails methylated at 'Lys-9' (H3K9me), leading to epigenetic repression. In contrast, it is excluded from chromatin when 'Tyr-41' of histone H3 is phosphorylated (H3Y41ph). May contribute to the association of heterochromatin with the inner nuclear membrane by interactions with the lamin-B receptor (LBR). Involved in the formation of kinetochore through interaction with the MIS12 complex subunit NSL1. Required for the formation of the inner centromere. The protein is Chromobox protein homolog 5 (CBX5) of Homo sapiens (Human).